Reading from the N-terminus, the 499-residue chain is Glutamyl-tRNA(Gln) amidotransferase subunit A (499 aa).

Catalysis depends on charge relay system residues K75 and S150. S174 acts as the Acyl-ester intermediate in catalysis.

The protein belongs to the amidase family. GatA subfamily. As to quaternary structure, heterotrimer of A, B and C subunits.

It carries out the reaction L-glutamyl-tRNA(Gln) + L-glutamine + ATP + H2O = L-glutaminyl-tRNA(Gln) + L-glutamate + ADP + phosphate + H(+). Functionally, allows the formation of correctly charged Gln-tRNA(Gln) through the transamidation of misacylated Glu-tRNA(Gln) in organisms which lack glutaminyl-tRNA synthetase. The reaction takes place in the presence of glutamine and ATP through an activated gamma-phospho-Glu-tRNA(Gln). The sequence is that of Glutamyl-tRNA(Gln) amidotransferase subunit A from Ralstonia pickettii (strain 12J).